The sequence spans 328 residues: Protease HtpX homolog (328 aa).

The next 2 membrane-spanning stretches (helical) occupy residues 6–26 (TAML…LIGG) and 28–48 (SGMM…YWNS). Zn(2+) is bound at residue H130. E131 is an active-site residue. H134 lines the Zn(2+) pocket. 2 helical membrane-spanning segments follow: residues 145–165 (ITAT…FFGG) and 172–192 (PLGA…AMLV). E201 provides a ligand contact to Zn(2+). Residues 279–328 (QYGGGTGPSVGTPTRSGSTGPAMTANPERKSRSVPNTGRGGSQPPKGPWS) form a disordered region. A compositionally biased stretch (low complexity) spans 287-299 (SVGTPTRSGSTGP).

The protein belongs to the peptidase M48B family. Zn(2+) is required as a cofactor.

It localises to the cell inner membrane. In Rhizobium rhizogenes (strain K84 / ATCC BAA-868) (Agrobacterium radiobacter), this protein is Protease HtpX homolog.